We begin with the raw amino-acid sequence, 107 residues long: Integration host factor subunit alpha (107 aa).

This sequence belongs to the bacterial histone-like protein family. In terms of assembly, heterodimer of an alpha and a beta chain.

In terms of biological role, this protein is one of the two subunits of integration host factor, a specific DNA-binding protein that functions in genetic recombination as well as in transcriptional and translational control. This Mesorhizobium japonicum (strain LMG 29417 / CECT 9101 / MAFF 303099) (Mesorhizobium loti (strain MAFF 303099)) protein is Integration host factor subunit alpha.